The primary structure comprises 202 residues: Small ribosomal subunit protein uS5 (202 aa).

One can recognise an S5 DRBM domain in the interval 42–105; sequence LKDEVLKIMP…ILAKLSIVPV (64 aa). At threonine 192 the chain carries Phosphothreonine.

It belongs to the universal ribosomal protein uS5 family. As to quaternary structure, component of the small ribosomal subunit. Interacts with zinc finger protein ZNF277 (via zinc-finger domains); the interaction is direct; the interaction is extra-ribosomal. Interaction with ZNF277 competes with the binding of RPS2 to protein arginine methyltransferase PRMT3. Citrullinated by PADI4 in the Arg/Gly-rich region. Post-translationally, asymmetric arginine dimethylation by PRMT3 occurs at multiple sites in the Arg/Gly-rich region. In terms of processing, monoubiquitinated by RNF10 when a ribosome has stalled during translation, leading to its degradation by the proteasome. Deubiquitinated by USP10, preventing degradation by the proteasome and promoting 40S ribosome subunit recycling following ribosome dissociation.

It localises to the cytoplasm. The protein resides in the nucleus. Its subcellular location is the nucleolus. Its function is as follows. Component of the ribosome, a large ribonucleoprotein complex responsible for the synthesis of proteins in the cell. The small ribosomal subunit (SSU) binds messenger RNAs (mRNAs) and translates the encoded message by selecting cognate aminoacyl-transfer RNA (tRNA) molecules. The large subunit (LSU) contains the ribosomal catalytic site termed the peptidyl transferase center (PTC), which catalyzes the formation of peptide bonds, thereby polymerizing the amino acids delivered by tRNAs into a polypeptide chain. The nascent polypeptides leave the ribosome through a tunnel in the LSU and interact with protein factors that function in enzymatic processing, targeting, and the membrane insertion of nascent chains at the exit of the ribosomal tunnel. Plays a role in the assembly and function of the 40S ribosomal subunit. Mutations in this protein affects the control of translational fidelity. Involved in nucleolar processing of pre-18S ribosomal RNA and ribosome assembly. The sequence is that of Small ribosomal subunit protein uS5 (RPS2) from Cricetulus griseus (Chinese hamster).